The sequence spans 477 residues: 3-isopropylmalate dehydratase large subunit (477 aa).

3 residues coordinate [4Fe-4S] cluster: Cys358, Cys419, and Cys422.

This sequence belongs to the aconitase/IPM isomerase family. LeuC type 1 subfamily. As to quaternary structure, heterodimer of LeuC and LeuD. It depends on [4Fe-4S] cluster as a cofactor.

The enzyme catalyses (2R,3S)-3-isopropylmalate = (2S)-2-isopropylmalate. It participates in amino-acid biosynthesis; L-leucine biosynthesis; L-leucine from 3-methyl-2-oxobutanoate: step 2/4. Its function is as follows. Catalyzes the isomerization between 2-isopropylmalate and 3-isopropylmalate, via the formation of 2-isopropylmaleate. The polypeptide is 3-isopropylmalate dehydratase large subunit (Acinetobacter baylyi (strain ATCC 33305 / BD413 / ADP1)).